We begin with the raw amino-acid sequence, 372 residues long: 2-aminoethylphosphonate--pyruvate transaminase 2 (372 aa).

Residue lysine 192 is modified to N6-(pyridoxal phosphate)lysine.

This sequence belongs to the class-V pyridoxal-phosphate-dependent aminotransferase family. PhnW subfamily. In terms of assembly, homodimer. The cofactor is pyridoxal 5'-phosphate.

It carries out the reaction (2-aminoethyl)phosphonate + pyruvate = phosphonoacetaldehyde + L-alanine. In terms of biological role, involved in phosphonate degradation. The chain is 2-aminoethylphosphonate--pyruvate transaminase 2 from Polaromonas sp. (strain JS666 / ATCC BAA-500).